A 337-amino-acid polypeptide reads, in one-letter code: ERI1 exoribonuclease 3 (337 aa).

The Exonuclease domain maps to 146–320 (FLVLDFEATC…DDCKNIANIM (175 aa)). Asp150, Glu152, and Asp249 together coordinate Mg(2+). The active-site Proton acceptor is the Glu152. Glu152 lines the AMP pocket. His307 acts as the Proton acceptor in catalysis. AMP is bound at residue His307. Position 312 (Asp312) interacts with Mg(2+).

Interacts with PRNP. Mg(2+) is required as a cofactor. In terms of tissue distribution, highly expressed in the brain, heart, thyroid and testis. Expressed at low levels in the muscle cells, liver, pancreas and kidney.

The protein is ERI1 exoribonuclease 3 (Eri3) of Mus musculus (Mouse).